Here is a 254-residue protein sequence, read N- to C-terminus: Hydroxyacylglutathione hydrolase (254 aa).

Zn(2+) is bound by residues His-53, His-55, Asp-57, His-58, His-111, Asp-128, and His-166.

This sequence belongs to the metallo-beta-lactamase superfamily. Glyoxalase II family. In terms of assembly, monomer. The cofactor is Zn(2+).

The catalysed reaction is an S-(2-hydroxyacyl)glutathione + H2O = a 2-hydroxy carboxylate + glutathione + H(+). It participates in secondary metabolite metabolism; methylglyoxal degradation; (R)-lactate from methylglyoxal: step 2/2. Thiolesterase that catalyzes the hydrolysis of S-D-lactoyl-glutathione to form glutathione and D-lactic acid. The polypeptide is Hydroxyacylglutathione hydrolase (Aeromonas salmonicida (strain A449)).